We begin with the raw amino-acid sequence, 224 residues long: MSTLHKVKAYFGMAPMDEYEDDYYEDDDRGPAPRGYRRPREDRFEDEGYAPRGYDGHPEDRRRDYDEPPAYRAGLAGGMPGGFDDARFEARMRAPREFDRTPPRFGAMRGSTRGALAMDPRGMAELFEAGSPLAKITTLRPKDYSEARTIGERFRDGTPVIMDLVSMDNADAKRLVDFAAGLAFALRGSFDKVATKVFLLSPADVDVTAEQRRRIAEAGFYSYQ.

Residues 21–78 (DDYYEDDDRGPAPRGYRRPREDRFEDEGYAPRGYDGHPEDRRRDYDEPPAYRAGLAGG) form a disordered region. The segment covering 54-66 (YDGHPEDRRRDYD) has biased composition (basic and acidic residues).

The protein belongs to the SepF family. Homodimer. Interacts with FtsZ.

It localises to the cytoplasm. Cell division protein that is part of the divisome complex and is recruited early to the Z-ring. Probably stimulates Z-ring formation, perhaps through the cross-linking of FtsZ protofilaments. Its function overlaps with FtsA. The sequence is that of Cell division protein SepF from Mycolicibacterium gilvum (strain PYR-GCK) (Mycobacterium gilvum (strain PYR-GCK)).